The following is a 274-amino-acid chain: Rhamnulose-1-phosphate aldolase (274 aa).

Residue glutamate 117 is part of the active site. Residues histidine 141, histidine 143, and histidine 212 each coordinate Zn(2+).

This sequence belongs to the aldolase class II family. RhaD subfamily. Homotetramer. It depends on Zn(2+) as a cofactor.

The protein localises to the cytoplasm. The catalysed reaction is L-rhamnulose 1-phosphate = (S)-lactaldehyde + dihydroxyacetone phosphate. It functions in the pathway carbohydrate degradation; L-rhamnose degradation; glycerone phosphate from L-rhamnose: step 3/3. Its function is as follows. Catalyzes the reversible cleavage of L-rhamnulose-1-phosphate to dihydroxyacetone phosphate (DHAP) and L-lactaldehyde. The chain is Rhamnulose-1-phosphate aldolase from Yersinia pestis.